The following is a 361-amino-acid chain: MTLLRIDGSYGEGGGQIIRTALSLAALTGTAVRLENIRARRRKPGLAAQHLTAVKAVALLCDARIGGAELGSQTLEFIPGRPVRAGDYTLDVGEAREGGSAGAVMLVLQTVLPPLALAEGASTVSLRGGTHVPMSPPFDYVREVWLPTLARMGVRAELSLVRSGWYPVGKGEVRLVVAGGRRSLEALKARHRGTLQAVTGRALAANLPAHIPERMAARARAVLADAGIAAAIEPAVLQAACAGAGLFLTARYDHCLAGFTALGRRGKSAERVAEEACGALLAHHRSGAALDQHLADQIVLPAALCREESLFSVERITPHLTTNAWVVDRFGLARVDVRLAECGTGLVRIHGNPAGVCHAHP.

Residues Gln109 and 293–297 (HLADQ) each bind ATP. His319 functions as the Tele-AMP-histidine intermediate in the catalytic mechanism.

It belongs to the RNA 3'-terminal cyclase family. Type 1 subfamily.

Its subcellular location is the cytoplasm. It catalyses the reaction a 3'-end 3'-phospho-ribonucleotide-RNA + ATP = a 3'-end 2',3'-cyclophospho-ribonucleotide-RNA + AMP + diphosphate. Functionally, catalyzes the conversion of 3'-phosphate to a 2',3'-cyclic phosphodiester at the end of RNA. The mechanism of action of the enzyme occurs in 3 steps: (A) adenylation of the enzyme by ATP; (B) transfer of adenylate to an RNA-N3'P to produce RNA-N3'PP5'A; (C) and attack of the adjacent 2'-hydroxyl on the 3'-phosphorus in the diester linkage to produce the cyclic end product. The biological role of this enzyme is unknown but it is likely to function in some aspects of cellular RNA processing. The polypeptide is RNA 3'-terminal phosphate cyclase (Methylococcus capsulatus (strain ATCC 33009 / NCIMB 11132 / Bath)).